The following is a 336-amino-acid chain: Coproporphyrin III ferrochelatase (336 aa).

Ser-52 and Tyr-116 together coordinate Fe-coproporphyrin III. Residues His-172 and Glu-255 each contribute to the Fe(2+) site.

This sequence belongs to the ferrochelatase family.

It is found in the cytoplasm. The enzyme catalyses Fe-coproporphyrin III + 2 H(+) = coproporphyrin III + Fe(2+). Its pathway is porphyrin-containing compound metabolism; protoheme biosynthesis. Its function is as follows. Involved in coproporphyrin-dependent heme b biosynthesis. Catalyzes the insertion of ferrous iron into coproporphyrin III to form Fe-coproporphyrin III. The protein is Coproporphyrin III ferrochelatase of Mycolicibacterium paratuberculosis (strain ATCC BAA-968 / K-10) (Mycobacterium paratuberculosis).